The chain runs to 341 residues: Anthranilate phosphoribosyltransferase (341 aa).

5-phospho-alpha-D-ribose 1-diphosphate-binding positions include Gly82, 85-86 (GD), Thr90, 92-95 (NIST), 110-118 (KHGNRAITS), and Thr122. Residue Gly82 participates in anthranilate binding. Residue Ser94 participates in Mg(2+) binding. Residue Asn113 participates in anthranilate binding. Anthranilate is bound at residue Arg168. Positions 226 and 227 each coordinate Mg(2+).

Belongs to the anthranilate phosphoribosyltransferase family. In terms of assembly, homodimer. The cofactor is Mg(2+).

It carries out the reaction N-(5-phospho-beta-D-ribosyl)anthranilate + diphosphate = 5-phospho-alpha-D-ribose 1-diphosphate + anthranilate. It functions in the pathway amino-acid biosynthesis; L-tryptophan biosynthesis; L-tryptophan from chorismate: step 2/5. In terms of biological role, catalyzes the transfer of the phosphoribosyl group of 5-phosphorylribose-1-pyrophosphate (PRPP) to anthranilate to yield N-(5'-phosphoribosyl)-anthranilate (PRA). This Caulobacter vibrioides (strain ATCC 19089 / CIP 103742 / CB 15) (Caulobacter crescentus) protein is Anthranilate phosphoribosyltransferase.